We begin with the raw amino-acid sequence, 331 residues long: Ketol-acid reductoisomerase (NADP(+)) (331 aa).

Positions 2–182 (VEIYYDDDAN…GGTRAGALRT (181 aa)) constitute a KARI N-terminal Rossmann domain. NADP(+) is bound by residues 25 to 28 (FGSQ), Ser51, and Ser53. His108 is a catalytic residue. An NADP(+)-binding site is contributed by Gly134. The region spanning 183–328 (TFTEETETDL…GKLRPMMSWI (146 aa)) is the KARI C-terminal knotted domain. The Mg(2+) site is built by Asp191, Glu195, Glu227, and Glu231. Position 252 (Ser252) interacts with substrate.

Belongs to the ketol-acid reductoisomerase family. Requires Mg(2+) as cofactor.

It catalyses the reaction (2R)-2,3-dihydroxy-3-methylbutanoate + NADP(+) = (2S)-2-acetolactate + NADPH + H(+). The catalysed reaction is (2R,3R)-2,3-dihydroxy-3-methylpentanoate + NADP(+) = (S)-2-ethyl-2-hydroxy-3-oxobutanoate + NADPH + H(+). It participates in amino-acid biosynthesis; L-isoleucine biosynthesis; L-isoleucine from 2-oxobutanoate: step 2/4. The protein operates within amino-acid biosynthesis; L-valine biosynthesis; L-valine from pyruvate: step 2/4. Functionally, involved in the biosynthesis of branched-chain amino acids (BCAA). Catalyzes an alkyl-migration followed by a ketol-acid reduction of (S)-2-acetolactate (S2AL) to yield (R)-2,3-dihydroxy-isovalerate. In the isomerase reaction, S2AL is rearranged via a Mg-dependent methyl migration to produce 3-hydroxy-3-methyl-2-ketobutyrate (HMKB). In the reductase reaction, this 2-ketoacid undergoes a metal-dependent reduction by NADPH to yield (R)-2,3-dihydroxy-isovalerate. In Parafrankia sp. (strain EAN1pec), this protein is Ketol-acid reductoisomerase (NADP(+)).